A 523-amino-acid polypeptide reads, in one-letter code: 2-isopropylmalate synthase (523 aa).

The 263-residue stretch at 5 to 267 (VIIFDTTLRD…HTAINHQEIW (263 aa)) folds into the Pyruvate carboxyltransferase domain. The Mn(2+) site is built by Asp14, His202, His204, and Asn238. The interval 392–523 (RLDYFSVQSG…QHNENNKETV (132 aa)) is regulatory domain.

It belongs to the alpha-IPM synthase/homocitrate synthase family. LeuA type 1 subfamily. Homodimer. Requires Mn(2+) as cofactor.

The protein localises to the cytoplasm. The catalysed reaction is 3-methyl-2-oxobutanoate + acetyl-CoA + H2O = (2S)-2-isopropylmalate + CoA + H(+). The protein operates within amino-acid biosynthesis; L-leucine biosynthesis; L-leucine from 3-methyl-2-oxobutanoate: step 1/4. Catalyzes the condensation of the acetyl group of acetyl-CoA with 3-methyl-2-oxobutanoate (2-ketoisovalerate) to form 3-carboxy-3-hydroxy-4-methylpentanoate (2-isopropylmalate). The chain is 2-isopropylmalate synthase from Shigella flexneri serotype 5b (strain 8401).